Consider the following 319-residue polypeptide: Homoserine O-acetyltransferase (319 aa).

Cys-142 acts as the Acyl-thioester intermediate in catalysis. Residues Lys-163 and Ser-192 each coordinate substrate. His-235 acts as the Proton acceptor in catalysis. Residue Glu-237 is part of the active site. Arg-249 lines the substrate pocket.

Belongs to the MetA family.

Its subcellular location is the cytoplasm. It carries out the reaction L-homoserine + acetyl-CoA = O-acetyl-L-homoserine + CoA. It participates in amino-acid biosynthesis; L-methionine biosynthesis via de novo pathway; O-acetyl-L-homoserine from L-homoserine: step 1/1. Its function is as follows. Transfers an acetyl group from acetyl-CoA to L-homoserine, forming acetyl-L-homoserine. In Lactococcus lactis subsp. cremoris (strain MG1363), this protein is Homoserine O-acetyltransferase.